Here is a 656-residue protein sequence, read N- to C-terminus: Choline transporter-like protein 1 (656 aa).

G2 is lipidated: N-myristoyl glycine. Over 2–29 (GCCSSASAAQSSKREWKPLEDRSCTDIP) the chain is Cytoplasmic. Residues 30-50 (WLLLFVLFCIGMGFICGFSVA) traverse the membrane as a helical segment. Residues 51 to 211 (TGAAARLVSG…RLISGVMTSK (161 aa)) lie on the Extracellular side of the membrane. Residues N134 and N179 are each glycosylated (N-linked (GlcNAc...) asparagine). Residues 212 to 232 (EIILGLCLLSLVLSMILMVII) traverse the membrane as a helical segment. Over 233–237 (RYISR) the chain is Cytoplasmic. The helical transmembrane segment at 238 to 258 (VLVWILTILVILGSLGGTGVL) threads the bilayer. Topologically, residues 259 to 287 (WWLYAKQRRSPKETVIPEQLQIAEDNLRA) are extracellular. Residues 288–308 (LLIYAISATVFTVILFLIMLV) traverse the membrane as a helical segment. The Cytoplasmic portion of the chain corresponds to 309–314 (MRKRVA). Residues 315–335 (LTIALFHVAGKVFIHLPLLVF) form a helical membrane-spanning segment. At 336–337 (QP) the chain is on the extracellular side. The chain crosses the membrane as a helical span at residues 338–358 (FWTFFALVLFWAYWIMTLLFL). Residues 359 to 379 (GTTGSAVQNEQGFVEYKISGP) are Cytoplasmic-facing. The helical transmembrane segment at 380–400 (LQYMWWYHVVGLIWISEFILA) threads the bilayer. The Extracellular segment spans residues 401–441 (CQQMTVAGAVVTYYFTRDKRNLPFTPILASVNRLIRYHLGT). The helical transmembrane segment at 442-462 (VAKGSFIITLVKIPRMILMYI) threads the bilayer. At 463–536 (HSQLKGKENA…RVAAINTVGD (74 aa)) the chain is on the cytoplasmic side. Residues 537 to 557 (FMLFLGKVLIVCSTGLAGIML) traverse the membrane as a helical segment. Topologically, residues 558-565 (LNYQQDYT) are extracellular. A helical transmembrane segment spans residues 566-586 (VWVLPLIIVCLFAFLVAHCFL). At 587–656 (SIYEMVVDVL…KPMASGASSA (70 aa)) the chain is on the cytoplasmic side. Residues 635-656 (AGKGGAADARKLKPMASGASSA) are disordered. Residue S651 is modified to Phosphoserine.

Belongs to the CTL (choline transporter-like) family. Expressed in neurons, oligodendrocytes and astrocytes. Also expressed in the mucosal cell layer of the colon. In the developing brain, isoform 1 is expressed in both neurons and oligodendroglial cells, whereas isoform 2 is restricted to oligodendroglial cells.

The protein localises to the cell membrane. It is found in the mitochondrion outer membrane. The catalysed reaction is choline(out) + n H(+)(in) = choline(in) + n H(+)(out). It carries out the reaction ethanolamine(out) + n H(+)(in) = ethanolamine(in) + n H(+)(out). In terms of biological role, choline transporter, acts as a choline/H+ antiporter. Also acts as a high-affinity ethanolamine/H+ antiporter, regulating the supply of extracellular ethanolamine (Etn) for the CDP-Etn pathway, redistribute intracellular Etn and balance the CDP-Cho and CDP-Etn arms of the Kennedy pathway. Involved in membrane synthesis and myelin production. This chain is Choline transporter-like protein 1 (Slc44a1), found in Rattus norvegicus (Rat).